The chain runs to 283 residues: Non-selective voltage-gated ion channel VDAC3 (283 aa).

Cys-2 is modified (N-acetylcysteine). Position 4 is a phosphothreonine (Thr-4). An N6-acetyllysine mark is found at Lys-12, Lys-15, and Lys-20. Beta stranded transmembrane passes span 26 to 35 (MVKIDLRTKS) and 39 to 47 (VEFSTSGHA). A Glycyl lysine isopeptide (Lys-Gly) (interchain with G-Cter in ubiquitin) cross-link involves residue Lys-53. The next 3 beta stranded transmembrane spans lie at 54 to 64 (ASGNLETKYKI), 69 to 76 (LTFTQKWN), and 80 to 89 (TLGTEISWEN). An N6-acetyllysine modification is found at Lys-90. Residues 95–104 (LKLTLDTIFV) traverse the membrane as a beta stranded segment. Glycyl lysine isopeptide (Lys-Gly) (interchain with G-Cter in ubiquitin) cross-links involve residues Lys-109 and Lys-110. Transmembrane regions (beta stranded) follow at residues 111-120 (SGKLKASYKR), 123-130 (FSLGSNVD), 137-145 (TIYGWAVLA), 150-158 (LAGYQMSFD), 163-175 (KLSQNNFALGYKA), 178-185 (FQLHTHVN), 189-198 (EFGGSIYQKV), 202-211 (IETSINLAWT), 218-227 (RFGIAAKYKL), and 231-238 (TSLSAKVN). Ser-241 bears the Phosphoserine mark. NAD(+)-binding positions include 242 to 244 (LIG) and 260 to 264 (SALID). The next 2 beta stranded transmembrane spans lie at 242 to 251 (LIGLGYTQTL) and 254 to 263 (GVKLTLSALI). Lys-266 is subject to N6-acetyllysine; alternate. Lys-266 participates in a covalent cross-link: Glycyl lysine isopeptide (Lys-Gly) (interchain with G-Cter in ubiquitin); alternate. Residues 273 to 282 (HKVGLGFELE) traverse the membrane as a beta stranded segment.

The protein belongs to the eukaryotic mitochondrial porin family. Interacts with ARMC12 in a TBC1D21-dependent manner. Interacts with MISFA. Ubiquitinated by PRKN during mitophagy, leading to its degradation and enhancement of mitophagy. Deubiquitinated by USP30.

It is found in the mitochondrion outer membrane. The protein resides in the membrane. The enzyme catalyses chloride(in) = chloride(out). The catalysed reaction is K(+)(in) = K(+)(out). Non-selective voltage-gated ion channel that mediates the transport of anions and cations through the mitochondrion outer membrane and plasma membrane. Forms a high-conducting channel with a stable open state and a voltage-induced closure with a mild preference for anions over cations. Involved in male fertility and sperm mitochondrial sheath formation. The sequence is that of Non-selective voltage-gated ion channel VDAC3 from Bos taurus (Bovine).